The chain runs to 438 residues: Gamma-glutamyl phosphate reductase (438 aa).

Belongs to the gamma-glutamyl phosphate reductase family.

Its subcellular location is the cytoplasm. The enzyme catalyses L-glutamate 5-semialdehyde + phosphate + NADP(+) = L-glutamyl 5-phosphate + NADPH + H(+). It participates in amino-acid biosynthesis; L-proline biosynthesis; L-glutamate 5-semialdehyde from L-glutamate: step 2/2. Catalyzes the NADPH-dependent reduction of L-glutamate 5-phosphate into L-glutamate 5-semialdehyde and phosphate. The product spontaneously undergoes cyclization to form 1-pyrroline-5-carboxylate. The sequence is that of Gamma-glutamyl phosphate reductase from Prochlorococcus marinus (strain MIT 9303).